The chain runs to 472 residues: Alanine--anticapsin ligase (472 aa).

Glutamate 109 lines the Mg(2+) pocket. Residues lysine 138 and lysine 178 each coordinate ATP. An ATP-grasp domain is found at 142 to 355; that stretch reads RAAFNRAGVK…MAQLLLDVLC (214 aa). Residue leucine 182 coordinates Mg(2+). Residues 184 to 185, 226 to 229, and glutamine 268 contribute to the ATP site; these read SS and EEFL. Residues glutamate 273 and 309-311 contribute to the substrate site; that span reads HTE. Positions 311 and 324 each coordinate Mg(2+). 328-331 contacts substrate; that stretch reads RFAG.

Monomer or homodimer. Requires Mg(2+) as cofactor.

The enzyme catalyses L-anticapsin + L-alanine + ATP = bacilysin + ADP + phosphate + H(+). It participates in antibiotic biosynthesis; bacilysin biosynthesis. Part of the bacABCDEFG operon responsible for the biosynthesis of bacilysin, an irreversible inactivator of the glutaminase domain of glucosamine synthetase. Catalyzes the formation of alpha-dipeptides from various L-amino acids in the presence of ATP. In vivo catalyzes the ligation of L-alanine and L-anticapsin (epoxycyclohexanonyl-Ala) to produce the final bacilysin antibiotic (L-Ala-L-4S-cyclohexenonyl-Ala dipeptide). This is Alanine--anticapsin ligase from Bacillus amyloliquefaciens (Bacillus velezensis).